The following is a 292-amino-acid chain: Ribosomal protein L11 methyltransferase (292 aa).

S-adenosyl-L-methionine-binding residues include Thr-138, Gly-159, Asp-181, and Asn-225.

This sequence belongs to the methyltransferase superfamily. PrmA family.

The protein resides in the cytoplasm. The enzyme catalyses L-lysyl-[protein] + 3 S-adenosyl-L-methionine = N(6),N(6),N(6)-trimethyl-L-lysyl-[protein] + 3 S-adenosyl-L-homocysteine + 3 H(+). Its function is as follows. Methylates ribosomal protein L11. The sequence is that of Ribosomal protein L11 methyltransferase from Leuconostoc citreum (strain KM20).